The primary structure comprises 232 residues: Histone H1-II (232 aa).

The span at 1–18 (MSDPAPEVAPAAPVASPA) shows a compositional bias: low complexity. Disordered stretches follow at residues 1–44 (MSDP…PPVS) and 103–232 (GKGA…AKKA). Residues 39–114 (THPPVSEMVV…GASGSFKLPA (76 aa)) form the H15 domain. 2 stretches are compositionally biased toward basic residues: residues 149-171 (SIAK…KSTK) and 179-232 (AAKK…AKKA).

Belongs to the histone H1/H5 family.

It localises to the nucleus. It is found in the chromosome. Functionally, histones H1 are necessary for the condensation of nucleosome chains into higher-order structures. This is Histone H1-II from Glyptotendipes barbipes (Midge).